Consider the following 192-residue polypeptide: Pyridoxal 5'-phosphate synthase subunit PdxT (192 aa).

53–55 (GES) lines the L-glutamine pocket. C82 functions as the Nucleophile in the catalytic mechanism. L-glutamine-binding positions include R109 and 137–138 (IR). Catalysis depends on charge relay system residues H173 and E175.

Belongs to the glutaminase PdxT/SNO family. In terms of assembly, in the presence of PdxS, forms a dodecamer of heterodimers. Only shows activity in the heterodimer.

It carries out the reaction aldehydo-D-ribose 5-phosphate + D-glyceraldehyde 3-phosphate + L-glutamine = pyridoxal 5'-phosphate + L-glutamate + phosphate + 3 H2O + H(+). The enzyme catalyses L-glutamine + H2O = L-glutamate + NH4(+). Its pathway is cofactor biosynthesis; pyridoxal 5'-phosphate biosynthesis. Catalyzes the hydrolysis of glutamine to glutamate and ammonia as part of the biosynthesis of pyridoxal 5'-phosphate. The resulting ammonia molecule is channeled to the active site of PdxS. The polypeptide is Pyridoxal 5'-phosphate synthase subunit PdxT (Methanoculleus marisnigri (strain ATCC 35101 / DSM 1498 / JR1)).